A 1368-amino-acid polypeptide reads, in one-letter code: DNA-directed RNA polymerase subunit beta (1368 aa).

The protein belongs to the RNA polymerase beta chain family. In terms of assembly, the RNAP catalytic core consists of 2 alpha, 1 beta, 1 beta' and 1 omega subunit. When a sigma factor is associated with the core the holoenzyme is formed, which can initiate transcription.

It catalyses the reaction RNA(n) + a ribonucleoside 5'-triphosphate = RNA(n+1) + diphosphate. DNA-dependent RNA polymerase catalyzes the transcription of DNA into RNA using the four ribonucleoside triphosphates as substrates. This is DNA-directed RNA polymerase subunit beta from Paraburkholderia phytofirmans (strain DSM 17436 / LMG 22146 / PsJN) (Burkholderia phytofirmans).